The following is a 169-amino-acid chain: Peptide deformylase (169 aa).

The Fe cation site is built by C91 and H133. Residue E134 is part of the active site. Residue H137 participates in Fe cation binding.

This sequence belongs to the polypeptide deformylase family. Requires Fe(2+) as cofactor.

The catalysed reaction is N-terminal N-formyl-L-methionyl-[peptide] + H2O = N-terminal L-methionyl-[peptide] + formate. In terms of biological role, removes the formyl group from the N-terminal Met of newly synthesized proteins. Requires at least a dipeptide for an efficient rate of reaction. N-terminal L-methionine is a prerequisite for activity but the enzyme has broad specificity at other positions. The polypeptide is Peptide deformylase (Aliivibrio salmonicida (strain LFI1238) (Vibrio salmonicida (strain LFI1238))).